The primary structure comprises 168 residues: WAP four-disulfide core domain protein 2 (168 aa).

The first 30 residues, 1-30, serve as a signal peptide directing secretion; the sequence is MPACRLCLLATGLLLGLLLFTPLSATGTRA. WAP domains follow at residues 31-74 and 119-167; these read EKPG…SKPN and NGEK…TTPK. 4 cysteine pairs are disulfide-bonded: Cys36–Cys62, Cys45–Cys66, Cys49–Cys61, and Cys55–Cys70. The disordered stretch occupies residues 100–123; sequence PLSRGQVSTKPPVVTKEGGNGEKQ. Disulfide bonds link Cys126-Cys154, Cys137-Cys158, Cys141-Cys153, and Cys147-Cys163.

As to quaternary structure, homotrimer; disulfide-linked.

Its subcellular location is the secreted. Functionally, broad range protease inhibitor. The polypeptide is WAP four-disulfide core domain protein 2 (Wfdc2) (Rattus norvegicus (Rat)).